The sequence spans 396 residues: Deoxyuridine 5'-triphosphate nucleotidohydrolase (396 aa).

Residues 280–282 (RSS) and 380–381 (FG) contribute to the substrate site.

It belongs to the dUTPase family. Requires Mg(2+) as cofactor.

The enzyme catalyses dUTP + H2O = dUMP + diphosphate + H(+). Functionally, involved in nucleotide metabolism: produces dUMP, the immediate precursor of thymidine nucleotides and decreases the intracellular concentration of dUTP to avoid uracil incorporation into viral DNA. The protein is Deoxyuridine 5'-triphosphate nucleotidohydrolase of Varicella-zoster virus (strain Dumas) (HHV-3).